The primary structure comprises 458 residues: UDP-N-acetylmuramate--L-alanine ligase (458 aa).

115–121 serves as a coordination point for ATP; that stretch reads GSHGKTT.

It belongs to the MurCDEF family.

It localises to the cytoplasm. It catalyses the reaction UDP-N-acetyl-alpha-D-muramate + L-alanine + ATP = UDP-N-acetyl-alpha-D-muramoyl-L-alanine + ADP + phosphate + H(+). Its pathway is cell wall biogenesis; peptidoglycan biosynthesis. Its function is as follows. Cell wall formation. The polypeptide is UDP-N-acetylmuramate--L-alanine ligase (Anaeromyxobacter sp. (strain Fw109-5)).